Consider the following 263-residue polypeptide: S-methyl-5'-thioadenosine phosphorylase (263 aa).

Residues T13, 55–56, and 88–89 each bind phosphate; these read RH and SA. A substrate-binding site is contributed by M186. Residue T187 participates in phosphate binding. 210–212 is a substrate binding site; that stretch reads DYD.

This sequence belongs to the PNP/MTAP phosphorylase family. MTAP subfamily. As to quaternary structure, homohexamer. Dimer of a homotrimer.

It carries out the reaction S-methyl-5'-thioadenosine + phosphate = 5-(methylsulfanyl)-alpha-D-ribose 1-phosphate + adenine. The protein operates within amino-acid biosynthesis; L-methionine biosynthesis via salvage pathway; S-methyl-5-thio-alpha-D-ribose 1-phosphate from S-methyl-5'-thioadenosine (phosphorylase route): step 1/1. In terms of biological role, catalyzes the reversible phosphorylation of S-methyl-5'-thioadenosine (MTA) to adenine and 5-methylthioribose-1-phosphate. Involved in the breakdown of MTA, a major by-product of polyamine biosynthesis. Responsible for the first step in the methionine salvage pathway after MTA has been generated from S-adenosylmethionine. Has broad substrate specificity with 6-aminopurine nucleosides as preferred substrates. The chain is S-methyl-5'-thioadenosine phosphorylase from Nitrosopumilus maritimus (strain SCM1).